Reading from the N-terminus, the 2320-residue chain is Sperm-associated antigen 17 (2320 aa).

Basic and acidic residues-rich tracts occupy residues 139-171 and 199-210; these read DQQR…EKKV and RRGEDDEAKSYI. Disordered stretches follow at residues 139 to 211, 388 to 407, 682 to 739, 894 to 928, 950 to 1001, 1084 to 1118, 1191 to 1221, 1334 to 1367, 1393 to 1416, 1983 to 2028, and 2080 to 2101; these read DQQR…SYID, IPEP…KAQY, AEQD…SMDQ, SASK…EKDK, EERL…AKTL, KEKE…EKVK, QGKG…EKKN, SSPD…KSET, DIIP…TTTP, KEAS…YENV, and TKES…EEPD. Polar residues predominate over residues 703-720; that stretch reads VTGSTSNSTKPWNSSNRQ. Positions 865–965 form a coiled coil; the sequence is EEAKYQEAKM…EKKAEKKGKD (101 aa). 2 stretches are compositionally biased toward basic and acidic residues: residues 914-928 and 950-999; these read ELSD…EKDK and EERL…EPAK. The span at 1090–1103 shows a compositional bias: acidic residues; the sequence is NSEEEEEEEEEKEE. 2 stretches are compositionally biased toward basic and acidic residues: residues 1104–1118 and 1203–1221; these read VEEK…EKVK and KHKD…EKKN. 2 stretches are compositionally biased toward polar residues: residues 2012–2028 and 2082–2094; these read VNKS…YENV and ESVS…NVTR.

As to quaternary structure, interacts (via the C-terminus) with SPAG6; the interaction probably occurs on polymerized microtubules. Highly expressed in testis, round spermatids, testicular sperm, epididymal sperm and in condensing spermatids (at protein level). Expressed in organs that contain cilia-bearing cells including brain, oviduct, lung, and uterus. Expressed in articular cartilage and bone.

Its subcellular location is the cytoplasm. The protein localises to the cytoskeleton. The protein resides in the flagellum axoneme. It localises to the cytoplasmic vesicle. It is found in the secretory vesicle. Its subcellular location is the acrosome. The protein localises to the golgi apparatus. In terms of biological role, component of the central pair apparatus of ciliary axonemes. Plays a critical role in the function and structure of motile cilia. May play a role in endochondral bone formation, most likely because of a function in primary cilia of chondrocytes and osteoblasts. Essential for normal spermatogenesis and male fertility. Required for normal manchette structure, transport of proteins along the manchette microtubules and formation of the sperm head and flagellum. Essential for sperm flagellum development and proper assembly of the respiratory motile cilia central pair apparatus, but not the brain ependymal cilia. This chain is Sperm-associated antigen 17 (Spag17), found in Mus musculus (Mouse).